A 118-amino-acid polypeptide reads, in one-letter code: Large ribosomal subunit protein uL18 (118 aa).

It belongs to the universal ribosomal protein uL18 family. As to quaternary structure, part of the 50S ribosomal subunit; part of the 5S rRNA/L5/L18/L25 subcomplex. Contacts the 5S and 23S rRNAs.

In terms of biological role, this is one of the proteins that bind and probably mediate the attachment of the 5S RNA into the large ribosomal subunit, where it forms part of the central protuberance. The polypeptide is Large ribosomal subunit protein uL18 (Campylobacter lari (strain RM2100 / D67 / ATCC BAA-1060)).